A 984-amino-acid chain; its full sequence is Mineralocorticoid receptor (984 aa).

The interval 1–602 (METKGYHSLP…STGSSRPSKI (602 aa)) is modulating. Positions 231-243 (QGTPLTCSPNVEN) are enriched in polar residues. 2 disordered regions span residues 231–329 (QGTP…AAST) and 347–373 (GTSA…QEVP). Serine 250, serine 259, serine 283, serine 287, and serine 299 each carry phosphoserine. The segment covering 259 to 291 (SPLSSPLSSMKSSISSPPSHCSVKSPVSSPNNV) has biased composition (low complexity). Positions 292 to 329 (TLRSSVSSPANINNSRCSVSSPSNTNNRSTLSSPAAST) are enriched in polar residues. Zn(2+) is bound by residues cysteine 603, cysteine 606, cysteine 620, cysteine 623, cysteine 639, cysteine 645, cysteine 655, and cysteine 658. 2 consecutive NR C4-type zinc fingers follow at residues 603–623 (CLVC…CGSC) and 639–663 (CAGR…LQKC). Positions 603–668 (CLVCGDEASG…RLQKCLQAGM (66 aa)) form a DNA-binding region, nuclear receptor. The segment at 669-725 (NLGARKSKKLGKLKGIHEEQPQQQQPPPPPPPPQSPEEGTTYIAPAKEPSVNTALVP) is hinge. The disordered stretch occupies residues 684 to 710 (IHEEQPQQQQPPPPPPPPQSPEEGTTY). Pro residues predominate over residues 692–703 (QQPPPPPPPPQS). An NR LBD domain is found at 726 to 964 (QLSTISRALT…EFPAMLVEII (239 aa)). Positions 770 and 776 each coordinate 21-hydroxyprogesterone. The aldosterone site is built by asparagine 770 and glutamine 776. Progesterone contacts are provided by asparagine 770 and glutamine 776. The important for coactivator binding stretch occupies residues 782–785 (KWAK). 2 residues coordinate 21-hydroxyprogesterone: arginine 817 and threonine 945. The aldosterone site is built by arginine 817 and threonine 945. Residues arginine 817 and threonine 945 each contribute to the progesterone site.

Belongs to the nuclear hormone receptor family. NR3 subfamily. In terms of assembly, heteromultimeric cytoplasmic complex with HSP90, HSP70, and FKBP4, in the absence of ligand. After ligand binding, it translocates to the nucleus and binds to DNA as a homodimer and as a heterodimer with NR3C1. May interact with HSD11B2 in the absence of ligand. Binds the coactivators NCOA1, NCOA2, TIF1 and NRIP1. In terms of processing, phosphorylated. As to expression, ubiquitous. Highly expressed in distal tubules, convoluted tubules and cortical collecting duct in kidney, and in sweat glands. Detected at lower levels in cardiomyocytes, in epidermis and in colon enterocytes.

The protein resides in the cytoplasm. Its subcellular location is the nucleus. It is found in the endoplasmic reticulum membrane. In terms of biological role, receptor for both mineralocorticoids (MC) such as aldosterone and glucocorticoids (GC) such as corticosterone or cortisol. Binds to mineralocorticoid response elements (MRE) and transactivates target genes. The effect of MC is to increase ion and water transport and thus raise extracellular fluid volume and blood pressure and lower potassium levels. The sequence is that of Mineralocorticoid receptor (NR3C2) from Homo sapiens (Human).